Reading from the N-terminus, the 82-residue chain is Myosin light chain alkali (82 aa).

The region spanning 7–42 (GCYEDFIECLKLYDKEENGTMLLAELQHALLALGEN) is the EF-hand domain.

As to quaternary structure, myosin is a hexamer of 2 heavy chains and 4 light chains.

The sequence is that of Myosin light chain alkali (Mlc1) from Drosophila teissieri (Fruit fly).